The primary structure comprises 105 residues: TPR repeat-containing protein PA0015 (105 aa).

TPR repeat units follow at residues 17–50 (ALLR…DPKY) and 52–84 (AGWK…AATH).

The chain is TPR repeat-containing protein PA0015 from Pseudomonas aeruginosa (strain ATCC 15692 / DSM 22644 / CIP 104116 / JCM 14847 / LMG 12228 / 1C / PRS 101 / PAO1).